The chain runs to 50 residues: Peroxiredoxin-6 (50 aa).

Residues 1–50 (DFTPVCTTELGRLAPEFAKRVVFIFGPDKKLKLSILYPATTGRNFDEILR) form the Thioredoxin domain. A Phosphothreonine modification is found at Thr3. Cys6 serves as the catalytic Cysteine sulfenic acid (-SOH) intermediate; for peroxidase activity. Lys19 bears the N6-acetyllysine mark. Asp28 acts as the For phospholipase activity in catalysis.

The protein belongs to the peroxiredoxin family. Prx6 subfamily. As to quaternary structure, homodimer. Interacts with GSTP1; mediates PRDX6 glutathionylation and regeneration. Interacts with APEX1. Interacts with STH. May interact with FAM168B. May interact with HTR2A. Irreversibly inactivated by overoxidation of Cys-6 to sulfinic acid (Cys-SO(2)H) and sulfonic acid (Cys-SO(3)H) forms upon oxidative stress. Post-translationally, phosphorylation at Thr-177 by MAP kinases increases the phospholipase activity of the enzyme. The phosphorylated form exhibits a greater lysophosphatidylcholine acyltransferase activity compared to the non-phosphorylated form.

The protein localises to the cytoplasm. The protein resides in the lysosome. It catalyses the reaction a hydroperoxide + 2 glutathione = an alcohol + glutathione disulfide + H2O. The catalysed reaction is a 1,2-diacyl-sn-glycero-3-phosphocholine + H2O = a 1-acyl-sn-glycero-3-phosphocholine + a fatty acid + H(+). The enzyme catalyses a 1-acyl-sn-glycero-3-phosphocholine + an acyl-CoA = a 1,2-diacyl-sn-glycero-3-phosphocholine + CoA. It carries out the reaction 1-hexadecanoyl-sn-glycero-3-phosphocholine + hexadecanoyl-CoA = 1,2-dihexadecanoyl-sn-glycero-3-phosphocholine + CoA. It catalyses the reaction 1,2-dihexadecanoyl-sn-glycero-3-phosphocholine + H2O = 1-hexadecanoyl-sn-glycero-3-phosphocholine + hexadecanoate + H(+). Its function is as follows. Thiol-specific peroxidase that catalyzes the reduction of hydrogen peroxide and organic hydroperoxides to water and alcohols, respectively. Can reduce H(2)O(2) and short chain organic, fatty acid, and phospholipid hydroperoxides. Also has phospholipase activity, and can therefore either reduce the oxidized sn-2 fatty acyl group of phospholipids (peroxidase activity) or hydrolyze the sn-2 ester bond of phospholipids (phospholipase activity). These activities are dependent on binding to phospholipids at acidic pH and to oxidized phospholipds at cytosolic pH. Plays a role in cell protection against oxidative stress by detoxifying peroxides and in phospholipid homeostasis. Exhibits acyl-CoA-dependent lysophospholipid acyltransferase which mediates the conversion of lysophosphatidylcholine (1-acyl-sn-glycero-3-phosphocholine or LPC) into phosphatidylcholine (1,2-diacyl-sn-glycero-3-phosphocholine or PC). Shows a clear preference for LPC as the lysophospholipid and for palmitoyl CoA as the fatty acyl substrate. This chain is Peroxiredoxin-6, found in Mesocricetus auratus (Golden hamster).